Reading from the N-terminus, the 308-residue chain is Olfactory receptor 2D2 (308 aa).

Over 1–25 (MRQINQTQVTEFLLLGLSDGPHTEQ) the chain is Extracellular. A glycan (N-linked (GlcNAc...) asparagine) is linked at asparagine 5. A helical transmembrane segment spans residues 26-49 (LLFIVLLGVYLVTVLGNLLLISLV). Residues 50–57 (HVDSQLHT) lie on the Cytoplasmic side of the membrane. Residues 58–79 (PMYFFLCNLSLADLCFSTNIVP) traverse the membrane as a helical segment. Residues 80-100 (QALVHLLSRKKVIAFTLCAAR) lie on the Extracellular side of the membrane. A helical transmembrane segment spans residues 101-120 (LLFFLIFGCTQCALLAVMSY). Residues 121–139 (DRYVAICNPLRYPNIMTWK) are Cytoplasmic-facing. Residues 140-158 (VCVQLATGSWTSGILVSVV) form a helical membrane-spanning segment. Over 159–195 (DTTFILRLPYRGSNSIAHFFCEAPALLILASTDTHAS) the chain is Extracellular. The chain crosses the membrane as a helical span at residues 196-219 (EMAIFLMGVVILLIPVFLILVSYG). Residues 220–236 (RIIVTVVKMKSTVGSLK) lie on the Cytoplasmic side of the membrane. A helical transmembrane segment spans residues 237 to 259 (AFSTCGSHLMVVILFYGSAIITY). The Extracellular segment spans residues 260-270 (MTPKSSKQQEK). The chain crosses the membrane as a helical span at residues 271 to 290 (SVSVFYAIVTPMLNPLIYSL). The Cytoplasmic portion of the chain corresponds to 291-308 (RNKDVKAALRKVATRNFP).

Belongs to the G-protein coupled receptor 1 family.

It localises to the cell membrane. Functionally, odorant receptor. The chain is Olfactory receptor 2D2 (OR2D2) from Homo sapiens (Human).